We begin with the raw amino-acid sequence, 477 residues long: Glycogen synthase (477 aa).

Position 15 (Lys15) interacts with ADP-alpha-D-glucose.

This sequence belongs to the glycosyltransferase 1 family. Bacterial/plant glycogen synthase subfamily.

The enzyme catalyses [(1-&gt;4)-alpha-D-glucosyl](n) + ADP-alpha-D-glucose = [(1-&gt;4)-alpha-D-glucosyl](n+1) + ADP + H(+). Its pathway is glycan biosynthesis; glycogen biosynthesis. Functionally, synthesizes alpha-1,4-glucan chains using ADP-glucose. This is Glycogen synthase from Caldicellulosiruptor saccharolyticus (strain ATCC 43494 / DSM 8903 / Tp8T 6331).